A 312-amino-acid chain; its full sequence is Acetylglutamate kinase (312 aa).

Substrate contacts are provided by residues 77 to 78 (GG), R99, and N192.

Belongs to the acetylglutamate kinase family. ArgB subfamily.

It localises to the cytoplasm. It catalyses the reaction N-acetyl-L-glutamate + ATP = N-acetyl-L-glutamyl 5-phosphate + ADP. It participates in amino-acid biosynthesis; L-arginine biosynthesis; N(2)-acetyl-L-ornithine from L-glutamate: step 2/4. Catalyzes the ATP-dependent phosphorylation of N-acetyl-L-glutamate. The polypeptide is Acetylglutamate kinase (Synechococcus sp. (strain JA-2-3B'a(2-13)) (Cyanobacteria bacterium Yellowstone B-Prime)).